The chain runs to 221 residues: Orotate phosphoribosyltransferase (221 aa).

5-phospho-alpha-D-ribose 1-diphosphate is bound at residue Lys26. Orotate is bound at residue 34–35 (FF). 5-phospho-alpha-D-ribose 1-diphosphate is bound by residues 72–73 (YK), Arg99, Lys100, Lys103, His105, and 124–132 (DDVITAGTA). Orotate contacts are provided by Thr128 and Arg156.

It belongs to the purine/pyrimidine phosphoribosyltransferase family. PyrE subfamily. Homodimer. Mg(2+) serves as cofactor.

The catalysed reaction is orotidine 5'-phosphate + diphosphate = orotate + 5-phospho-alpha-D-ribose 1-diphosphate. The protein operates within pyrimidine metabolism; UMP biosynthesis via de novo pathway; UMP from orotate: step 1/2. Catalyzes the transfer of a ribosyl phosphate group from 5-phosphoribose 1-diphosphate to orotate, leading to the formation of orotidine monophosphate (OMP). In Colwellia psychrerythraea (strain 34H / ATCC BAA-681) (Vibrio psychroerythus), this protein is Orotate phosphoribosyltransferase.